The primary structure comprises 142 residues: MAAMTVHLDIVSAENSIFKGRVACLQVTGVEGELGILPGHAPLLTTIKPGMARIIKQDGSEEVIYLSGGFLEVQPNSIAVLADVVMRADEIDEQAALEAKRRAEAHMADAGADFDYDAAMVELAKAMAQLRVVETIKKNIAR.

Belongs to the ATPase epsilon chain family. F-type ATPases have 2 components, CF(1) - the catalytic core - and CF(0) - the membrane proton channel. CF(1) has five subunits: alpha(3), beta(3), gamma(1), delta(1), epsilon(1). CF(0) has three main subunits: a, b and c.

It localises to the cell inner membrane. In terms of biological role, produces ATP from ADP in the presence of a proton gradient across the membrane. The polypeptide is ATP synthase epsilon chain (Shewanella putrefaciens (strain CN-32 / ATCC BAA-453)).